An 85-amino-acid polypeptide reads, in one-letter code: Sodium channel neurotoxin MeuNaTxalpha-2 (85 aa).

Residues 1 to 19 (MNYLVMISLALLLMTGVES) form the signal peptide. In terms of domain architecture, LCN-type CS-alpha/beta spans 21 to 83 (RDAYIANDRN…VPIRIPGECR (63 aa)). 4 cysteine pairs are disulfide-bonded: Cys-31–Cys-82, Cys-35–Cys-55, Cys-41–Cys-65, and Cys-45–Cys-67. Arg-83 bears the Arginine amide mark.

Belongs to the long (4 C-C) scorpion toxin superfamily. Sodium channel inhibitor family. Alpha subfamily. Expressed by the venom gland.

The protein resides in the secreted. In terms of biological role, alpha toxins bind voltage-independently at site-3 of sodium channels (Nav) and inhibit the inactivation of the activated channels, thereby blocking neuronal transmission. This toxin inhibits inactivation of Nav1.4/SCN4A (EC(50)=2.23 uM) and drosophila DmNav1 (EC(50)=220 nM). The toxin (1 uM) does not significantly shift the midpoint of activation at the two channels, but induces a significant depolarizing shift in the V(1/2) of inactivation of the channels. In addition, the toxin accelerates the recovery from fast inactivation in Nav1.4/SCN4A and DmNav1. It also shows antimicrobial activity. This is Sodium channel neurotoxin MeuNaTxalpha-2 from Mesobuthus eupeus (Lesser Asian scorpion).